A 475-amino-acid polypeptide reads, in one-letter code: Methylenetetrahydrofolate--tRNA-(uracil-5-)-methyltransferase TrmFO (475 aa).

Glycine 13 to glycine 18 lines the FAD pocket.

The protein belongs to the MnmG family. TrmFO subfamily. FAD serves as cofactor.

The protein localises to the cytoplasm. It catalyses the reaction uridine(54) in tRNA + (6R)-5,10-methylene-5,6,7,8-tetrahydrofolate + NADH + H(+) = 5-methyluridine(54) in tRNA + (6S)-5,6,7,8-tetrahydrofolate + NAD(+). The enzyme catalyses uridine(54) in tRNA + (6R)-5,10-methylene-5,6,7,8-tetrahydrofolate + NADPH + H(+) = 5-methyluridine(54) in tRNA + (6S)-5,6,7,8-tetrahydrofolate + NADP(+). In terms of biological role, catalyzes the folate-dependent formation of 5-methyl-uridine at position 54 (M-5-U54) in all tRNAs. The protein is Methylenetetrahydrofolate--tRNA-(uracil-5-)-methyltransferase TrmFO of Bradyrhizobium diazoefficiens (strain JCM 10833 / BCRC 13528 / IAM 13628 / NBRC 14792 / USDA 110).